We begin with the raw amino-acid sequence, 359 residues long: Mitochondrial glutathione transporter SLC25A39 (359 aa).

At 1–14 (MDDQDPGGISPLQQ) the chain is on the mitochondrial intermembrane side. Solcar repeat units follow at residues 9-151 (ISPL…LKAF), 159-243 (SDLY…VKSQ), and 253-347 (TSVG…GKSF). A helical membrane pass occupies residues 15–35 (MVASGAGAVVTSLFMTPLDVV). Residues 36-121 (KVRLQSQRPT…VKIVRHEGTR (86 aa)) are Mitochondrial matrix-facing. [2Fe-2S] cluster is bound by residues Cys74, Cys78, Cys88, and Cys94. The helical transmembrane segment at 122–142 (TLWSGLPATLVMTVPATAIYF) threads the bilayer. At 143 to 164 (TAYDQLKAFLCGQSLTSDLYAP) the chain is on the mitochondrial intermembrane side. Residues 165-185 (MVAGALARMGTVTVVSPLELV) traverse the membrane as a helical segment. The Mitochondrial matrix portion of the chain corresponds to 186 to 214 (RTKLQAQHVSYRELAACVQAAVAQGGWRS). A helical membrane pass occupies residues 215-235 (LWLGWGPTALRDVPFSALYWF). The Mitochondrial intermembrane segment spans residues 236–255 (NYELVKSQLNGPRQKEQTSV). A helical membrane pass occupies residues 256–276 (GISFVAGGISGMVAATLTLPF). The Mitochondrial matrix segment spans residues 277–317 (DVVKTQRQMSLGAVEAMRVKPPRVDSTWLLLRRIQAESGTR). A helical membrane pass occupies residues 318–338 (GLFAGFLPRIIKAAPSCAIMI). At 339–359 (STYEFGKSFFHRLNQEQPLGH) the chain is on the mitochondrial intermembrane side.

This sequence belongs to the mitochondrial carrier (TC 2.A.29) family. In terms of processing, cleaved and degraded by AFG3L2; degradation by AFG3L2 is regulated by the ability of SLC25A39 to bind iron-sulfur. In absence of mitochondrial glutathione, SLC25A39 binds iron-sulfur, preventing cleavage and degradation by AFG3L2. The presence of mitochondrial glutathione prevents iron-sulfur-binding to SLC25A39, promoting cleavage and degradation by AFG3L2.

It is found in the mitochondrion inner membrane. It catalyses the reaction glutathione(in) = glutathione(out). The activity of SLC25A39 is regulated by levels of mitochondrial glutathione via its ability to bind [2Fe-2S] iron-sulfur cluster. Upon physiological levels of mitochondrial glutathione, glutathione prevents iron-sulfur-binding to SLC25A39 promoting cleavage and degradation by AFG3L2. Upon depletion of mitochondrial glutathione, SLC25A39 binds iron-sulfur, preventing cleavage and degradation by AFG3L2. In terms of biological role, mitochondrial transporter required for glutathione import into mitochondria. Glutathione, which plays key roles in oxidative metabolism, is produced exclusively in the cytosol and is imported in many organelles. Mitochondrial glutathione is required for the activity and stability of proteins containing iron-sulfur clusters, as well as erythropoiesis. In Rattus norvegicus (Rat), this protein is Mitochondrial glutathione transporter SLC25A39 (Slc25a39).